A 460-amino-acid polypeptide reads, in one-letter code: Probable protein phosphatase 2C 38 (460 aa).

Disordered stretches follow at residues 1 to 30 (MVAV…AVPS) and 83 to 111 (RPMR…GRIA). The span at 100–109 (PRDREPRDGR) shows a compositional bias: basic and acidic residues. In terms of domain architecture, PPM-type phosphatase spans 118-432 (AASLYTMRGN…DDCAVVCLFL (315 aa)). Mn(2+)-binding residues include D154 and G155. The segment at 192-219 (VTSSMTEGGGTERMDRDTETPLGTEENG) is disordered. The segment covering 201–210 (GTERMDRDTE) has biased composition (basic and acidic residues). 2 residues coordinate Mn(2+): D377 and D423.

This sequence belongs to the PP2C family. The cofactor is Mg(2+). Mn(2+) is required as a cofactor.

The enzyme catalyses O-phospho-L-seryl-[protein] + H2O = L-seryl-[protein] + phosphate. It catalyses the reaction O-phospho-L-threonyl-[protein] + H2O = L-threonyl-[protein] + phosphate. The protein is Probable protein phosphatase 2C 38 of Oryza sativa subsp. japonica (Rice).